The chain runs to 892 residues: Alanine--tRNA ligase (892 aa).

Residues H596, H600, C700, and H704 each contribute to the Zn(2+) site.

Belongs to the class-II aminoacyl-tRNA synthetase family. Requires Zn(2+) as cofactor.

The protein localises to the cytoplasm. The catalysed reaction is tRNA(Ala) + L-alanine + ATP = L-alanyl-tRNA(Ala) + AMP + diphosphate. Catalyzes the attachment of alanine to tRNA(Ala) in a two-step reaction: alanine is first activated by ATP to form Ala-AMP and then transferred to the acceptor end of tRNA(Ala). Also edits incorrectly charged Ser-tRNA(Ala) and Gly-tRNA(Ala) via its editing domain. This is Alanine--tRNA ligase from Methanococcus vannielii (strain ATCC 35089 / DSM 1224 / JCM 13029 / OCM 148 / SB).